Consider the following 103-residue polypeptide: Small ribosomal subunit protein uS10 (103 aa).

This sequence belongs to the universal ribosomal protein uS10 family. Part of the 30S ribosomal subunit.

Involved in the binding of tRNA to the ribosomes. This Hydrogenovibrio crunogenus (strain DSM 25203 / XCL-2) (Thiomicrospira crunogena) protein is Small ribosomal subunit protein uS10.